The sequence spans 520 residues: Peptide chain release factor 3 (520 aa).

In terms of domain architecture, tr-type G spans 8-277 (ESRKTFAIIS…HAPMPNARQT (270 aa)). GTP is bound by residues 17–24 (SHPDAGKT), 85–89 (DTPGH), and 139–142 (NKLD).

Belongs to the TRAFAC class translation factor GTPase superfamily. Classic translation factor GTPase family. PrfC subfamily.

It is found in the cytoplasm. In terms of biological role, increases the formation of ribosomal termination complexes and stimulates activities of RF-1 and RF-2. It binds guanine nucleotides and has strong preference for UGA stop codons. It may interact directly with the ribosome. The stimulation of RF-1 and RF-2 is significantly reduced by GTP and GDP, but not by GMP. This is Peptide chain release factor 3 from Staphylococcus saprophyticus subsp. saprophyticus (strain ATCC 15305 / DSM 20229 / NCIMB 8711 / NCTC 7292 / S-41).